The primary structure comprises 284 residues: Probable sulfate transport system permease protein cysT (284 aa).

The next 7 helical transmembrane spans lie at 25–45 (AWAL…GALL), 75–95 (SALI…WVLV), 107–127 (AAVD…LATV), 145–165 (VAFT…PFVV), 194–214 (FLRV…ALAF), 223–243 (SVVI…VLIF), and 255–275 (TVIG…INWI). Residues 69–272 (YAVTLSSALI…LISLTLLLAI (204 aa)) enclose the ABC transmembrane type-1 domain.

The protein belongs to the binding-protein-dependent transport system permease family. CysTW subfamily.

The protein resides in the plastid. The protein localises to the chloroplast membrane. Part of the ABC transporter complex cysAWTP (TC 3.A.1.6.1) involved in sulfate/thiosulfate import. Probably responsible for the translocation of the substrate across the membrane. This chain is Probable sulfate transport system permease protein cysT (cysT), found in Nephroselmis olivacea (Green alga).